Reading from the N-terminus, the 839-residue chain is Toll-like receptor 4 (839 aa).

Residues 1–23 form the signal peptide; the sequence is MMSASRLAGTLIPAMAFLSCVRP. The Extracellular segment spans residues 24–631; sequence ESWEPCVEVV…SLNITCQMNK (608 aa). Residues Cys29 and Cys40 are joined by a disulfide bond. N-linked (GlcNAc...) asparagine glycosylation occurs at Asn35. 5 LRR repeats span residues 55–76, 79–100, 103–124, 127–148, and 151–172; these read STKN…SFFS, ELQV…AYQS, HLST…AFSG, SLQK…PIGH, and TLKE…EYFS. Asn173 carries an N-linked (GlcNAc...) asparagine glycan. 3 LRR repeats span residues 176–199, 205–225, and 227–247; these read NLEH…RVLH, NLSL…AFKE, and RLHK…KTCI. N-linked (GlcNAc...) asparagine glycosylation occurs at Asn205. Cys281 and Cys306 form a disulfide bridge. N-linked (GlcNAc...) asparagine glycosylation is found at Asn282 and Asn309. LRR repeat units follow at residues 331 to 351, 352 to 373, 374 to 394, 400 to 422, 423 to 444, 448 to 456, 472 to 495, 497 to 518, 521 to 542, and 545 to 565; these read GWQH…LKLK, SLKR…VDLP, SLEF…CSQS, SLKY…LGLE, QLEH…SVFL, NLIYLDISH, SLEV…FTEL, NLTF…AFNS, SLQV…PYKC, and SLQV…QELQ. Cys390 and Cys391 are disulfide-bonded. Asn497 and Asn526 each carry an N-linked (GlcNAc...) asparagine glycan. Asn575 carries N-linked (GlcNAc...) asparagine glycosylation. One can recognise an LRRCT domain in the interval 579 to 629; the sequence is NDFACTCEHQSFLQWIKDQRQLLVEVERMECATPSDKQGMPVLSLNITCQM. Disulfide bonds link Cys583–Cys609 and Cys585–Cys627. Residues Asn624 and Asn630 are each glycosylated (N-linked (GlcNAc...) asparagine). The chain crosses the membrane as a helical span at residues 632–652; the sequence is TIIGVSVLSVLVVSVVAVLVY. Residues 653–839 lie on the Cytoplasmic side of the membrane; that stretch reads KFYFHLMLLA…GCNWQEATSI (187 aa). Residues 672–815 form the TIR domain; the sequence is NIYDAFVIYS…IFWRRLRKAL (144 aa).

This sequence belongs to the Toll-like receptor family. In terms of assembly, belongs to the lipopolysaccharide (LPS) receptor, a multi-protein complex containing at least CD14, LY96 and TLR4. Binding to bacterial LPS leads to homodimerization. Interacts with LY96 via the extracellular domain. Interacts with MYD88 and TIRAP via their respective TIR domains. Interacts with NOX4. Interacts with CNPY3 and HSP90B1; this interaction is required for proper folding in the endoplasmic reticulum. Interacts with MAP3K21; this interaction leads to negative regulation of TLR4 signaling. Interacts with CD36, following CD36 stimulation by oxLDL or amyloid-beta 42, and forms a heterodimer with TLR6. The trimeric complex is internalized and triggers inflammatory response. LYN kinase activity facilitates TLR4-TLR6 heterodimerization and signal initiation. Interacts with TICAM1 in response to LPS in a WDFY1-dependent manner. Interacts with WDFY1 in response to LPS. Interacts with SMPDL3B. Interacts with CEACAM1; upon lipopolysaccharide stimulation, forms a complex including TLR4 and the phosphorylated form of SYK and CEACAM1, which in turn, recruits PTPN6 that dephosphorylates SYK, reducing the production of reactive oxygen species (ROS) and lysosome disruption, which in turn, reduces the activity of the inflammasome. Interacts with RFTN1; the interaction occurs in response to lipopolysaccharide stimulation. Interacts with SCIMP; the interaction occurs in response to lipopolysaccharide stimulation and is enhanced by phosphorylation of SCIMP by LYN. This interaction facilitates the phosphorylation of TLR4 by LYN which elicits a selective cytokine response in macrophages. Interacts with TRAF3IP3. Interacts with TREM1; this interaction enhances TLR4-mediated inflammatory response. Interacts with ZG16B/PAUF. Interacts with CD82; this interaction inhibits TLR4-mediated signaling pathway. Phosphorylated on tyrosine residues by LYN after binding lipopolysaccharide. Post-translationally, ubiquitinated by RNF128 via 'Lys-28'-linked polyubiquitin chains, leading to proteasomal degradation.

Its subcellular location is the cell membrane. It localises to the early endosome. The protein localises to the cell projection. The protein resides in the ruffle. Its function is as follows. Transmembrane receptor that functions as a pattern recognition receptor recognizing pathogen- and damage-associated molecular patterns (PAMPs and DAMPs) to induce innate immune responses via downstream signaling pathways. At the plasma membrane, cooperates with LY96 to mediate the innate immune response to bacterial lipopolysaccharide (LPS). Also involved in LPS-independent inflammatory responses triggered by free fatty acids, such as palmitate, and Ni(2+). Mechanistically, acts via MYD88, TIRAP and TRAF6, leading to NF-kappa-B activation, cytokine secretion and the inflammatory response. Alternatively, CD14-mediated TLR4 internalization via endocytosis is associated with the initiation of a MYD88-independent signaling via the TICAM1-TBK1-IRF3 axis leading to type I interferon production. In addition to the secretion of proinflammatory cytokines, initiates the activation of NLRP3 inflammasome and formation of a positive feedback loop between autophagy and NF-kappa-B signaling cascade. In complex with TLR6, promotes inflammation in monocytes/macrophages by associating with TLR6 and the receptor CD86. Upon ligand binding, such as oxLDL or amyloid-beta 42, the TLR4:TLR6 complex is internalized and triggers inflammatory response, leading to NF-kappa-B-dependent production of CXCL1, CXCL2 and CCL9 cytokines, via MYD88 signaling pathway, and CCL5 cytokine, via TICAM1 signaling pathway. In myeloid dendritic cells, vesicular stomatitis virus glycoprotein G but not LPS promotes the activation of IRF7, leading to type I IFN production in a CD14-dependent manner. This chain is Toll-like receptor 4 (TLR4), found in Pan paniscus (Pygmy chimpanzee).